A 148-amino-acid chain; its full sequence is uncharacterized protein (148 aa).

Its subcellular location is the plastid. The protein localises to the chloroplast. This is an uncharacterized protein from Porphyra purpurea (Red seaweed).